The following is a 333-amino-acid chain: Ribosomal RNA small subunit methyltransferase C (333 aa).

The protein belongs to the methyltransferase superfamily. RsmC family. As to quaternary structure, monomer.

The protein localises to the cytoplasm. The enzyme catalyses guanosine(1207) in 16S rRNA + S-adenosyl-L-methionine = N(2)-methylguanosine(1207) in 16S rRNA + S-adenosyl-L-homocysteine + H(+). Specifically methylates the guanine in position 1207 of 16S rRNA in the 30S particle. This chain is Ribosomal RNA small subunit methyltransferase C, found in Actinobacillus succinogenes (strain ATCC 55618 / DSM 22257 / CCUG 43843 / 130Z).